A 57-amino-acid polypeptide reads, in one-letter code: Large ribosomal subunit protein bL32 (57 aa).

Positions 1–23 are disordered; sequence MAVPKKKTSKSKRDKRRATWRHK.

This sequence belongs to the bacterial ribosomal protein bL32 family.

This Trichormus variabilis (strain ATCC 29413 / PCC 7937) (Anabaena variabilis) protein is Large ribosomal subunit protein bL32.